A 350-amino-acid polypeptide reads, in one-letter code: Protein XRP2 (350 aa).

Basic residues predominate over residues M1–K10. The disordered stretch occupies residues M1 to Q31. G2 is lipidated: N-myristoyl glycine. The S-palmitoyl cysteine moiety is linked to residue C3. Residues A11–Q31 show a composition bias toward basic and acidic residues. The C-CAP/cofactor C-like domain occupies P24–P179. GTP-binding positions include G98–S99 and Q115–R118.

Belongs to the TBCC family. In terms of assembly, found in a complex with ARL3, RP2 and UNC119 (or UNC119B); RP2 induces hydrolysis of GTP ARL3 in the complex, leading to the release of UNC119 (or UNC119B). Interacts with ARL3; interaction is direct and stimulated with the activated GTP-bound form of ARL3. Post-translationally, myristoylated on Gly-2; which may be required for membrane targeting. Palmitoylated on Cys-3; which may be required for plasma membrane targeting. Mutation of Cys-3 targets the protein to internal membranes. In terms of tissue distribution, ubiquitous. Expressed in the rod and cone photoreceptors, extending from the tips of the outer segment (OS) through the inner segment (IS) and outer nuclear layer (ONL) and into the synaptic terminals of the outer plexiform layer (ONL). Also detected in the bipolar, horizontal and amacrine cells in the inner nuclear layer (INL), extending to the inner plexiform layer (IPL) and though the ganglion cell layer (GCL) and into the nerve fiber layer (NFL) (at protein level).

Its subcellular location is the cell membrane. It is found in the cell projection. The protein localises to the cilium. Acts as a GTPase-activating protein (GAP) involved in trafficking between the Golgi and the ciliary membrane. Involved in localization of proteins, such as NPHP3, to the cilium membrane by inducing hydrolysis of GTP ARL3, leading to the release of UNC119 (or UNC119B). Acts as a GTPase-activating protein (GAP) for tubulin in concert with tubulin-specific chaperone C, but does not enhance tubulin heterodimerization. Acts as a guanine nucleotide dissociation inhibitor towards ADP-ribosylation factor-like proteins. This is Protein XRP2 (RP2) from Homo sapiens (Human).